The sequence spans 179 residues: MASQNRDPVAASVAAARKGAEPSGGAARGPVGKRLQQELMTLMMSGDKGISAFPESDNLFKWVGTIHGAAGTVYEDLRYKLSLEFPSGYPYNAPTVKFLTPCYHPNVDTQGNICLDILKDKWSALYDVRTILLSIQSLLGEPNIDSPLNTHAAELWKNPTAFKKYLQETYSKQVSSQDP.

A disordered region spans residues 1–31 (MASQNRDPVAASVAAARKGAEPSGGAARGPV). A2 carries the post-translational modification N-acetylalanine. Position 3 is a phosphoserine (S3). The UBC core domain maps to 30-175 (PVGKRLQQEL…LQETYSKQVS (146 aa)). Residue C114 is the Glycyl thioester intermediate of the active site.

The protein belongs to the ubiquitin-conjugating enzyme family. Component of the APC/C complex, composed of at least 14 distinct subunits that assemble into a complex of at least 19 chains with a combined molecular mass of around 1.2 MDa. Within this complex, directly interacts with ANAPC2. In terms of processing, autoubiquitinated by the APC/C complex, leading to its degradation by the proteasome. Its degradation plays a central role in APC/C regulation, allowing cyclin-A accumulation before S phase entry. APC/C substrates inhibit the autoubiquitination of UBE2C/UBCH10 but not its E2 function, hence APC/C remaining active until its substrates have been destroyed.

The catalysed reaction is S-ubiquitinyl-[E1 ubiquitin-activating enzyme]-L-cysteine + [E2 ubiquitin-conjugating enzyme]-L-cysteine = [E1 ubiquitin-activating enzyme]-L-cysteine + S-ubiquitinyl-[E2 ubiquitin-conjugating enzyme]-L-cysteine.. It carries out the reaction S-ubiquitinyl-[E1 ubiquitin-activating enzyme]-L-cysteine + [acceptor protein]-L-lysine = [E1 ubiquitin-activating enzyme]-L-cysteine + N(6)-monoubiquitinyl-[acceptor protein]-L-lysine.. The protein operates within protein modification; protein ubiquitination. Functionally, accepts ubiquitin from the E1 complex and catalyzes its covalent attachment to other proteins. In vitro catalyzes 'Lys-11'- and 'Lys-48'-linked polyubiquitination. Acts as an essential factor of the anaphase promoting complex/cyclosome (APC/C), a cell cycle-regulated ubiquitin ligase that controls progression through mitosis. Acts by initiating 'Lys-11'-linked polyubiquitin chains on APC/C substrates, leading to the degradation of APC/C substrates by the proteasome and promoting mitotic exit. The polypeptide is Ubiquitin-conjugating enzyme E2 C (UBE2C) (Bos taurus (Bovine)).